The following is a 507-amino-acid chain: L-threonine dehydratase biosynthetic IlvA (507 aa).

N6-(pyridoxal phosphate)lysine is present on Lys-52. Pyridoxal 5'-phosphate-binding positions include Asn-79, 182–186 (GGGGL), and Ser-309. ACT-like domains are found at residues 333–404 (AVFA…DLTH) and 427–498 (RLFR…EESA).

The protein belongs to the serine/threonine dehydratase family. Homotetramer. It depends on pyridoxal 5'-phosphate as a cofactor.

It catalyses the reaction L-threonine = 2-oxobutanoate + NH4(+). Its pathway is amino-acid biosynthesis; L-isoleucine biosynthesis; 2-oxobutanoate from L-threonine: step 1/1. Functionally, catalyzes the anaerobic formation of alpha-ketobutyrate and ammonia from threonine in a two-step reaction. The first step involved a dehydration of threonine and a production of enamine intermediates (aminocrotonate), which tautomerizes to its imine form (iminobutyrate). Both intermediates are unstable and short-lived. The second step is the nonenzymatic hydrolysis of the enamine/imine intermediates to form 2-ketobutyrate and free ammonia. In the low water environment of the cell, the second step is accelerated by RidA. The protein is L-threonine dehydratase biosynthetic IlvA (ilvA) of Burkholderia multivorans (strain ATCC 17616 / 249).